The chain runs to 387 residues: Patatin-03 (387 aa).

An N-terminal signal peptide occupies residues 1–23 (MATTKSVLVLIFMILATTSSTFA). A PNPLA domain is found at 32–230 (LSIDGGGIKG…TVADPALLSV (199 aa)). A GXGXXG motif is present at residues 36–41 (GGGIKG). The GXSXG signature appears at 75–79 (GTSTG). S77 (nucleophile) is an active-site residue. N115 and N203 each carry an N-linked (GlcNAc...) asparagine glycan. The active-site Proton acceptor is D216. The DGA/G motif lies at 216–218 (DGA).

It belongs to the patatin family. As to expression, tuber.

Its subcellular location is the vacuole. Probable lipolytic acyl hydrolase (LAH), an activity which is thought to be involved in the response of tubers to pathogens. The polypeptide is Patatin-03 (Solanum tuberosum (Potato)).